The sequence spans 55 residues: Cop-6 protein (55 aa).

The protein belongs to the transcriptional regulatory CopG/NikR family.

In terms of biological role, acts in trans as a negative regulatory element in pE194 replication. The sequence is that of Cop-6 protein from Staphylococcus aureus.